Reading from the N-terminus, the 61-residue chain is Small ribosomal subunit protein uS14 (61 aa).

Positions 24, 27, 40, and 43 each coordinate Zn(2+).

This sequence belongs to the universal ribosomal protein uS14 family. Zinc-binding uS14 subfamily. As to quaternary structure, part of the 30S ribosomal subunit. Contacts proteins S3 and S10. Zn(2+) is required as a cofactor.

In terms of biological role, binds 16S rRNA, required for the assembly of 30S particles and may also be responsible for determining the conformation of the 16S rRNA at the A site. This is Small ribosomal subunit protein uS14 from Mycoplasmopsis pulmonis (strain UAB CTIP) (Mycoplasma pulmonis).